The sequence spans 163 residues: Putative 4-hydroxy-4-methyl-2-oxoglutarate aldolase (163 aa).

Residues 76–79 and Arg98 each bind substrate; that span reads GDMI. Residue Asp99 coordinates a divalent metal cation.

The protein belongs to the class II aldolase/RraA-like family. Homotrimer. The cofactor is a divalent metal cation.

The enzyme catalyses 4-hydroxy-4-methyl-2-oxoglutarate = 2 pyruvate. It catalyses the reaction oxaloacetate + H(+) = pyruvate + CO2. Functionally, catalyzes the aldol cleavage of 4-hydroxy-4-methyl-2-oxoglutarate (HMG) into 2 molecules of pyruvate. Also contains a secondary oxaloacetate (OAA) decarboxylase activity due to the common pyruvate enolate transition state formed following C-C bond cleavage in the retro-aldol and decarboxylation reactions. The chain is Putative 4-hydroxy-4-methyl-2-oxoglutarate aldolase from Pseudomonas fluorescens (strain Pf0-1).